A 312-amino-acid polypeptide reads, in one-letter code: Olfactory receptor 10P22 (312 aa).

Residues 1–26 (MGDDNDTDITEFILLGFSGYGFLQGH) lie on the Extracellular side of the membrane. An N-linked (GlcNAc...) asparagine glycan is attached at Asn5. The helical transmembrane segment at 27-47 (LFWGVLCIYVVTLLGNSLIVL) threads the bilayer. Residues 48–57 (LTLADSALHS) are Cytoplasmic-facing. Residues 58-78 (PMYFFLRHFSVVEILYTTTIV) traverse the membrane as a helical segment. Residues 79 to 89 (PRMLADLRSSC) are Extracellular-facing. The chain crosses the membrane as a helical span at residues 90-110 (PTIPLASCFTQLYFFALFGIA). Over 111–143 (ECCLLTAMAYDRYAAICCPLHYTTLMSQGTYTG) the chain is Cytoplasmic. A helical transmembrane segment spans residues 144 to 164 (LVGASYLAGVISGTTHSIFIF). The Extracellular portion of the chain corresponds to 165 to 205 (TLPFRGAKTIHHFLCDILPVLRLATASTFWGEVGNLFVTIT). The chain crosses the membrane as a helical span at residues 206–226 (FIFVPFLLIVASYACILVTIL). At 227–236 (GVATSQGRQK) the chain is on the cytoplasmic side. The chain crosses the membrane as a helical span at residues 237 to 257 (LFSTCSSHLFVVILFFGTATV). At 258 to 271 (AYMRPQADSFGNTD) the chain is on the extracellular side. Residues 272-292 (QILTLVYTVVTPMCNPFVYSL) traverse the membrane as a helical segment. Topologically, residues 293–312 (RNKEVTGAMRRLMKRYLWGP) are cytoplasmic.

It belongs to the G-protein coupled receptor 1 family.

The protein localises to the cell membrane. Functionally, odorant receptor. The sequence is that of Olfactory receptor 10P22 from Mus musculus (Mouse).